The chain runs to 453 residues: UDP-glucosyltransferase avaP (453 aa).

The protein belongs to the UDP-glycosyltransferase family.

The protein operates within secondary metabolite biosynthesis. Its function is as follows. UDP-glucosyltransferase; part of the cluster that mediates the biosynthesis of a highly modified cyclo-arginine-tryptophan dipeptide (cRW). The first step of the pathway is perfornmed by the arginine-containing cyclodipeptide synthase (RCPDS) avaA that acts as the scaffold-generating enzyme and is responsible for formation of the cyclo-Arg-Trp (cRW) diketopiperazine. AvaB then acts as a multifunctional flavoenzyme that is responsible for generating the cyclo-Arg-formylkynurenine DKP, which can be deformylated by avaC. AvaB then further catalyzes an additional N-oxidation followed by cyclization and dehydration. The next step is an N-acetylation of the guanidine group catalyzed by the arginine N-acetyltransferase avaD. The roles of the additional enzymes identified within the ava cluster still have to be determined. The polypeptide is UDP-glucosyltransferase avaP (Aspergillus versicolor).